Reading from the N-terminus, the 715-residue chain is Epidermal growth factor receptor kinase substrate 8-like protein 2 (715 aa).

The region spanning 46-202 is the PID domain; sequence MHETSQYHVQ…RQRQSILPPP (157 aa). The segment at 183–243 is disordered; sequence QTLKGHQEKI…GFRRRESQEE (61 aa). Pro residues predominate over residues 199–208; sequence LPPPQGPAPI. Basic and acidic residues-rich tracts occupy residues 213 to 222 and 234 to 243; these read RGGDSPEAKN and GFRRRESQEE. At Ser-240 the chain carries Phosphoserine. Position 303 is a phosphothreonine (Thr-303). The segment at 448–487 is disordered; the sequence is VSPVSRQSIRNSQKHSPTSEPTPPGDALPPVSSPHTHRGY. Phosphoserine is present on Ser-449. Positions 451–466 are enriched in polar residues; that stretch reads VSRQSIRNSQKHSPTS. Thr-469 carries the phosphothreonine modification. The SH3 domain maps to 492–551; it reads AMAKYVKILYDFTARNANELSVLKDEVLEVLEDGRQWWKLRSRSGQAGYVPCNILGEARP. Ser-570 carries the phosphoserine modification.

Belongs to the EPS8 family. As to quaternary structure, interacts with ABI1. Part of a complex that contains SOS1, ABI1 and EPS8L2. Associates with F-actin. As to expression, detected in fibroblasts and placenta.

Its subcellular location is the cytoplasm. The protein resides in the cell projection. The protein localises to the stereocilium. Stimulates guanine exchange activity of SOS1. May play a role in membrane ruffling and remodeling of the actin cytoskeleton. In the cochlea, is required for stereocilia maintenance in adult hair cells. In Homo sapiens (Human), this protein is Epidermal growth factor receptor kinase substrate 8-like protein 2 (EPS8L2).